Reading from the N-terminus, the 498-residue chain is Putative BTB/POZ domain-containing protein L788 (498 aa).

A BTB domain is found at 28-99 (TDIILVLEDD…FYGQKIKSGN (72 aa)).

Belongs to the mimivirus BTB/WD family.

The polypeptide is Putative BTB/POZ domain-containing protein L788 (Acanthamoeba polyphaga (Amoeba)).